We begin with the raw amino-acid sequence, 92 residues long: MANTTSAKKATRKIARRTDVNKARRSRVRTFVRQVEEAIASGDADKAKAAFLAAQPELARAASKGVLHSNTASRKVSRLAARVKALSVSATA.

A disordered region spans residues 1–23 (MANTTSAKKATRKIARRTDVNKA).

It belongs to the bacterial ribosomal protein bS20 family.

Functionally, binds directly to 16S ribosomal RNA. This is Small ribosomal subunit protein bS20 from Rhizobium etli (strain CIAT 652).